A 446-amino-acid chain; its full sequence is tRNA modification GTPase MnmE (446 aa).

(6S)-5-formyl-5,6,7,8-tetrahydrofolate is bound by residues Arg-24, Glu-81, and Lys-120. One can recognise a TrmE-type G domain in the interval Gly-216 to Leu-368. Asn-226 serves as a coordination point for K(+). Residues Asn-226–Ser-231, Thr-245–Thr-251, and Asp-270–Gly-273 each bind GTP. Position 230 (Ser-230) interacts with Mg(2+). Residues Thr-245, Val-247, and Thr-250 each coordinate K(+). Thr-251 provides a ligand contact to Mg(2+). Lys-446 serves as a coordination point for (6S)-5-formyl-5,6,7,8-tetrahydrofolate.

The protein belongs to the TRAFAC class TrmE-Era-EngA-EngB-Septin-like GTPase superfamily. TrmE GTPase family. Homodimer. Heterotetramer of two MnmE and two MnmG subunits. Requires K(+) as cofactor.

It localises to the cytoplasm. Exhibits a very high intrinsic GTPase hydrolysis rate. Involved in the addition of a carboxymethylaminomethyl (cmnm) group at the wobble position (U34) of certain tRNAs, forming tRNA-cmnm(5)s(2)U34. The polypeptide is tRNA modification GTPase MnmE (Xanthomonas oryzae pv. oryzae (strain MAFF 311018)).